Reading from the N-terminus, the 341-residue chain is 1-aminocyclopropane-1-carboxylate deaminase (341 aa).

Ser-1 is subject to N-acetylserine. Lys-51 is modified (N6-(pyridoxal phosphate)lysine). Ser-78 acts as the Nucleophile in catalysis.

This sequence belongs to the ACC deaminase/D-cysteine desulfhydrase family. As to quaternary structure, homodimer. Requires pyridoxal 5'-phosphate as cofactor.

The enzyme catalyses 1-aminocyclopropane-1-carboxylate + H2O = 2-oxobutanoate + NH4(+). Catalyzes a cyclopropane ring-opening reaction, the irreversible conversion of 1-aminocyclopropane-1-carboxylate (ACC) to ammonia and alpha-ketobutyrate. This is 1-aminocyclopropane-1-carboxylate deaminase from Cyberlindnera saturnus (Yeast).